Consider the following 183-residue polypeptide: ATP synthase subunit delta (183 aa).

Belongs to the ATPase delta chain family. As to quaternary structure, F-type ATPases have 2 components, F(1) - the catalytic core - and F(0) - the membrane proton channel. F(1) has five subunits: alpha(3), beta(3), gamma(1), delta(1), epsilon(1). F(0) has three main subunits: a(1), b(2) and c(10-14). The alpha and beta chains form an alternating ring which encloses part of the gamma chain. F(1) is attached to F(0) by a central stalk formed by the gamma and epsilon chains, while a peripheral stalk is formed by the delta and b chains.

It is found in the cell inner membrane. F(1)F(0) ATP synthase produces ATP from ADP in the presence of a proton or sodium gradient. F-type ATPases consist of two structural domains, F(1) containing the extramembraneous catalytic core and F(0) containing the membrane proton channel, linked together by a central stalk and a peripheral stalk. During catalysis, ATP synthesis in the catalytic domain of F(1) is coupled via a rotary mechanism of the central stalk subunits to proton translocation. In terms of biological role, this protein is part of the stalk that links CF(0) to CF(1). It either transmits conformational changes from CF(0) to CF(1) or is implicated in proton conduction. This is ATP synthase subunit delta from Rickettsia typhi (strain ATCC VR-144 / Wilmington).